Consider the following 103-residue polypeptide: Pyrimidine/purine nucleoside phosphorylase (103 aa).

Belongs to the nucleoside phosphorylase PpnP family.

The catalysed reaction is a purine D-ribonucleoside + phosphate = a purine nucleobase + alpha-D-ribose 1-phosphate. It carries out the reaction adenosine + phosphate = alpha-D-ribose 1-phosphate + adenine. The enzyme catalyses cytidine + phosphate = cytosine + alpha-D-ribose 1-phosphate. It catalyses the reaction guanosine + phosphate = alpha-D-ribose 1-phosphate + guanine. The catalysed reaction is inosine + phosphate = alpha-D-ribose 1-phosphate + hypoxanthine. It carries out the reaction thymidine + phosphate = 2-deoxy-alpha-D-ribose 1-phosphate + thymine. The enzyme catalyses uridine + phosphate = alpha-D-ribose 1-phosphate + uracil. It catalyses the reaction xanthosine + phosphate = alpha-D-ribose 1-phosphate + xanthine. In terms of biological role, catalyzes the phosphorolysis of diverse nucleosides, yielding D-ribose 1-phosphate and the respective free bases. Can use uridine, adenosine, guanosine, cytidine, thymidine, inosine and xanthosine as substrates. Also catalyzes the reverse reactions. The sequence is that of Pyrimidine/purine nucleoside phosphorylase from Shewanella sp. (strain W3-18-1).